Consider the following 481-residue polypeptide: Zinc metalloproteinase/disintegrin (481 aa).

Positions 1–20 (MIQVLLVTICLAVFPYQGSS) are cleaved as a signal peptide. A propeptide spanning residues 21-190 (IILESGNVDD…KASQLYLTPE (170 aa)) is cleaved from the precursor. Residues 197–392 (RHIELAIVVD…KKPQCILNAP (196 aa)) enclose the Peptidase M12B domain. Ca(2+) contacts are provided by Glu200 and Asp284. Cystine bridges form between Cys308-Cys387, Cys349-Cys371, and Cys351-Cys354. His333 provides a ligand contact to Zn(2+). Residue Glu334 is part of the active site. His337 and His343 together coordinate Zn(2+). 2 residues coordinate Ca(2+): Cys387 and Asn390. Positions 393 to 410 (LRTDTVSTPISGNEFLEA) are excised as a propeptide. Residues 400–481 (TPISGNEFLE…ADCPRNGLYG (82 aa)) enclose the Disintegrin domain. 6 cysteine pairs are disulfide-bonded: Cys414–Cys429, Cys416–Cys424, Cys423–Cys446, Cys437–Cys443, Cys442–Cys467, and Cys455–Cys474. Residues 459-461 (RGD) carry the Cell attachment site motif.

Belongs to the venom metalloproteinase (M12B) family. P-II subfamily. P-IIa sub-subfamily. Monomer. Zn(2+) is required as a cofactor. Expressed by the venom gland.

It localises to the secreted. Its function is as follows. Impairs hemostasis in the envenomed animal. Inhibits platelet aggregation induced by ADP and collagen. Acts by inhibiting fibrinogen interaction with platelet receptors GPIIb/GPIIIa (ITGA2B/ITGB3). Has antitumor-growth activity. The polypeptide is Zinc metalloproteinase/disintegrin (Protobothrops jerdonii (Jerdon's pitviper)).